The primary structure comprises 150 residues: Aspartate 1-decarboxylase 2 (150 aa).

The Schiff-base intermediate with substrate; via pyruvic acid role is filled by Ser24. Pyruvic acid (Ser) is present on Ser24. A substrate-binding site is contributed by Thr56. The Proton donor role is filled by Tyr57. 72-74 serves as a coordination point for substrate; it reads GAA.

Belongs to the PanD family. As to quaternary structure, heterooctamer of four alpha and four beta subunits. The cofactor is pyruvate. In terms of processing, is synthesized initially as an inactive proenzyme, which is activated by self-cleavage at a specific serine bond to produce a beta-subunit with a hydroxyl group at its C-terminus and an alpha-subunit with a pyruvoyl group at its N-terminus.

It localises to the cytoplasm. The catalysed reaction is L-aspartate + H(+) = beta-alanine + CO2. The protein operates within cofactor biosynthesis; (R)-pantothenate biosynthesis; beta-alanine from L-aspartate: step 1/1. Catalyzes the pyruvoyl-dependent decarboxylation of aspartate to produce beta-alanine. This chain is Aspartate 1-decarboxylase 2, found in Mesorhizobium japonicum (strain LMG 29417 / CECT 9101 / MAFF 303099) (Mesorhizobium loti (strain MAFF 303099)).